A 907-amino-acid chain; its full sequence is Polyphosphoinositide phosphatase (907 aa).

The 394-residue stretch at F154–G547 folds into the SAC domain. A disordered region spans residues G707–A788. Over residues S758–G770 the composition is skewed to acidic residues.

Component of the PI(3,5)P2 regulatory complex/PAS complex, at least composed of PIKFYVE, FIG4 and VAC14. VAC14 nucleates the assembly of the complex and serves as a scaffold by pentamerizing into a star-shaped structure, which can bind a single copy each of PIKFYVE and FIG4 and coordinates their activities.

Its subcellular location is the endosome membrane. The enzyme catalyses a 1,2-diacyl-sn-glycero-3-phospho-(1D-myo-inositol-3,5-bisphosphate) + H2O = a 1,2-diacyl-sn-glycero-3-phospho-(1D-myo-inositol-3-phosphate) + phosphate. The catalysed reaction is a 1,2-diacyl-sn-glycero-3-phospho-(1D-myo-inositol-4,5-bisphosphate) + H2O = a 1,2-diacyl-sn-glycero-3-phospho-(1D-myo-inositol 4-phosphate) + phosphate. It carries out the reaction a 1,2-diacyl-sn-glycero-3-phospho-(1D-myo-inositol-3,4,5-trisphosphate) + H2O = a 1,2-diacyl-sn-glycero-3-phospho-(1D-myo-inositol-3,4-bisphosphate) + phosphate. It catalyses the reaction O-phospho-L-seryl-[protein] + H2O = L-seryl-[protein] + phosphate. Its function is as follows. Dual specificity phosphatase component of the PI(3,5)P2 regulatory complex which regulates both the synthesis and turnover of phosphatidylinositol 3,5-bisphosphate (PtdIns(3,5)P2). Catalyzes the dephosphorylation of phosphatidylinositol 3,5-bisphosphate (PtdIns(3,5)P2) to form phosphatidylinositol 3-phosphate. Has serine-protein phosphatase activity acting on PIKfyve to stimulate its lipid kinase activity, its catalytically activity being required for maximal PI(3,5)P2 production. In vitro, hydrolyzes all three D5-phosphorylated polyphosphoinositide and although displaying preferences for PtdIns(3,5)P2, it is capable of hydrolyzing PtdIns(3,4,5)P3 and PtdIns(4,5)P2, at least in vitro. The protein is Polyphosphoinositide phosphatase of Homo sapiens (Human).